The following is a 742-amino-acid chain: Photosystem I P700 chlorophyll a apoprotein A2 (742 aa).

The next 8 membrane-spanning stretches (helical) occupy residues 46 to 69 (LFST…FHIA), 135 to 158 (LFQA…LHLQ), 175 to 199 (LNHH…HVAI), 273 to 291 (IAHH…GHMY), 336 to 359 (LHFQ…QHMG), 375 to 401 (SALY…IFFV), 423 to 445 (ALIS…IYVH), and 525 to 543 (FLVH…LILI). C567 and C576 together coordinate [4Fe-4S] cluster. Transmembrane regions (helical) follow at residues 583-604 (AMYL…YWHW) and 651-673 (LSVW…MFLI). The divinyl chlorophyll a site is built by H662, M670, and Y678. W679 contributes to the phylloquinone binding site. A helical transmembrane segment spans residues 715 to 735 (LVGLAHFTIGNILTFGAFVIA).

This sequence belongs to the PsaA/PsaB family. In terms of assembly, the PsaA/B heterodimer binds the P700 divinyl chlorophyll special pair and subsequent electron acceptors. PSI consists of a core antenna complex that captures photons, and an electron transfer chain that converts photonic excitation into a charge separation. The cyanobacterial PSI reaction center is composed of one copy each of PsaA,B,C,D,E,F,I,J,K,L,M and X, and forms trimeric complexes. PSI electron transfer chain: 5 divinyl chlorophyll a, 1 divinyl chlorophyll a', 2 phylloquinones and 3 4Fe-4S clusters. PSI core antenna: 90 divinyl chlorophyll a, 22 carotenoids, 3 phospholipids and 1 galactolipid. P700 is a divinyl chlorophyll a/divinyl chlorophyll a' dimer, A0 is one or more divinyl chlorophyll a, A1 is one or both phylloquinones and FX is a shared 4Fe-4S iron-sulfur center. is required as a cofactor.

It is found in the cellular thylakoid membrane. The catalysed reaction is reduced [plastocyanin] + hnu + oxidized [2Fe-2S]-[ferredoxin] = oxidized [plastocyanin] + reduced [2Fe-2S]-[ferredoxin]. PsaA and PsaB bind P700, the primary electron donor of photosystem I (PSI), as well as the electron acceptors A0, A1 and FX. PSI is a plastocyanin/cytochrome c6-ferredoxin oxidoreductase, converting photonic excitation into a charge separation, which transfers an electron from the donor P700 chlorophyll pair to the spectroscopically characterized acceptors A0, A1, FX, FA and FB in turn. Oxidized P700 is reduced on the lumenal side of the thylakoid membrane by plastocyanin or cytochrome c6. In Prochlorococcus marinus subsp. pastoris (strain CCMP1986 / NIES-2087 / MED4), this protein is Photosystem I P700 chlorophyll a apoprotein A2.